A 506-amino-acid chain; its full sequence is Histidine ammonia-lyase (506 aa).

Positions 143 to 145 (ASG) form a cross-link, 5-imidazolinone (Ala-Gly). S144 carries the post-translational modification 2,3-didehydroalanine (Ser).

Belongs to the PAL/histidase family. In terms of processing, contains an active site 4-methylidene-imidazol-5-one (MIO), which is formed autocatalytically by cyclization and dehydration of residues Ala-Ser-Gly.

It is found in the cytoplasm. It carries out the reaction L-histidine = trans-urocanate + NH4(+). It functions in the pathway amino-acid degradation; L-histidine degradation into L-glutamate; N-formimidoyl-L-glutamate from L-histidine: step 1/3. This Salmonella choleraesuis (strain SC-B67) protein is Histidine ammonia-lyase.